A 132-amino-acid polypeptide reads, in one-letter code: Myelin P2 protein (132 aa).

Residue serine 2 is modified to N-acetylserine. Arginine 107 contacts (9Z)-octadecenoate. Arginine 107 serves as a coordination point for hexadecanoate. Cysteine 118 and cysteine 125 are joined by a disulfide. 127–129 serves as a coordination point for (9Z)-octadecenoate; that stretch reads RIY. 127 to 129 is a binding site for hexadecanoate; sequence RIY.

This sequence belongs to the calycin superfamily. Fatty-acid binding protein (FABP) family. Monomer. As to expression, detected in spinal cord (at protein level).

Its subcellular location is the cytoplasm. Functionally, may play a role in lipid transport protein in Schwann cells. May bind cholesterol. This Equus caballus (Horse) protein is Myelin P2 protein (PMP2).